Here is a 285-residue protein sequence, read N- to C-terminus: MRASPLLSLSIFITFVSIFSLLTYLPSFFAQISRIERQLEEELDEFLNIEHEFRKEFDIYPKNYERRQKKHVYSYCECEYINTCPPGRIGITGPDGQPGKDGLPGMPGSPGIPGELPNILYQQVFGCRICPYGPKGKSGYKGIDGPPGIPGWPGEPGVRGMNGERGSTGLDGAPGEPGSPGLPGFAGLPGSIGITGIKGVMGEVGEPGAPGIPGEEGLSGPTGQPGSPGSIGAMGYEGAYGDRGEPGPPGPIGRRGGPGLDSHYCPCPSRKMFLSILREKTKKQL.

Triple-helical region stretches follow at residues 87–116 (GRIGITGPDGQPGKDGLPGMPGSPGIPGEL) and 133–261 (GPKG…PGLD). A compositionally biased stretch (low complexity) spans 207–231 (PGAPGIPGEEGLSGPTGQPGSPGSI). Residues 207–257 (PGAPGIPGEEGLSGPTGQPGSPGSIGAMGYEGAYGDRGEPGPPGPIGRRGG) form a disordered region.

The protein belongs to the cuticular collagen family. In terms of assembly, collagen polypeptide chains are complexed within the cuticle by disulfide bonds and other types of covalent cross-links.

Nematode cuticles are composed largely of collagen-like proteins. The cuticle functions both as an exoskeleton and as a barrier to protect the worm from its environment. The sequence is that of Putative cuticle collagen 75 (col-75) from Caenorhabditis elegans.